We begin with the raw amino-acid sequence, 378 residues long: Alanine racemase (378 aa).

Catalysis depends on Lys-40, which acts as the Proton acceptor; specific for D-alanine. N6-(pyridoxal phosphate)lysine is present on Lys-40. Arg-140 contributes to the substrate binding site. The active-site Proton acceptor; specific for L-alanine is the Tyr-270. Met-317 contributes to the substrate binding site.

It belongs to the alanine racemase family. It depends on pyridoxal 5'-phosphate as a cofactor.

The enzyme catalyses L-alanine = D-alanine. The protein operates within amino-acid biosynthesis; D-alanine biosynthesis; D-alanine from L-alanine: step 1/1. In terms of biological role, catalyzes the interconversion of L-alanine and D-alanine. May also act on other amino acids. In Lacticaseibacillus paracasei (strain ATCC 334 / BCRC 17002 / CCUG 31169 / CIP 107868 / KCTC 3260 / NRRL B-441) (Lactobacillus paracasei), this protein is Alanine racemase (alr).